Consider the following 223-residue polypeptide: Deoxyribose-phosphate aldolase 2 (223 aa).

Asp92 (proton donor/acceptor) is an active-site residue. Lys154 (schiff-base intermediate with acetaldehyde) is an active-site residue. The active-site Proton donor/acceptor is Lys183.

Belongs to the DeoC/FbaB aldolase family. DeoC type 1 subfamily.

The protein localises to the cytoplasm. It carries out the reaction 2-deoxy-D-ribose 5-phosphate = D-glyceraldehyde 3-phosphate + acetaldehyde. Its pathway is carbohydrate degradation; 2-deoxy-D-ribose 1-phosphate degradation; D-glyceraldehyde 3-phosphate and acetaldehyde from 2-deoxy-alpha-D-ribose 1-phosphate: step 2/2. In terms of biological role, catalyzes a reversible aldol reaction between acetaldehyde and D-glyceraldehyde 3-phosphate to generate 2-deoxy-D-ribose 5-phosphate. In Oceanobacillus iheyensis (strain DSM 14371 / CIP 107618 / JCM 11309 / KCTC 3954 / HTE831), this protein is Deoxyribose-phosphate aldolase 2.